A 134-amino-acid chain; its full sequence is Phospholipase A2 (134 aa).

Residues tryptophan 8, glycine 10, and glycine 12 each contribute to the Ca(2+) site. 5 disulfides stabilise this stretch: cysteine 9–cysteine 31, cysteine 30–cysteine 70, cysteine 37–cysteine 63, cysteine 61–cysteine 95, and cysteine 105–cysteine 113. N-linked (GlcNAc...) asparagine glycosylation occurs at asparagine 13. Histidine 34 is a catalytic residue. Aspartate 35 serves as a coordination point for Ca(2+). Aspartate 64 is an active-site residue.

It belongs to the phospholipase A2 family. Group III subfamily. It depends on Ca(2+) as a cofactor. As to expression, expressed by the venom gland.

The protein localises to the secreted. It carries out the reaction a 1,2-diacyl-sn-glycero-3-phosphocholine + H2O = a 1-acyl-sn-glycero-3-phosphocholine + a fatty acid + H(+). In terms of biological role, PLA2 catalyzes the calcium-dependent hydrolysis of the 2-acyl groups in 3-sn-phosphoglycerides. The chain is Phospholipase A2 from Apis dorsata (Giant honeybee).